The sequence spans 288 residues: MSSSMWYIMQSIQSKYSLSERLIRTIAAIRSFPHDNVEDLIRGGADVNCTHGTLKPLHCACMVSDADCVELLLEKGAEVNALDGYNRTALHYAAERDEACVEVLLEYGANPNALDGNRDTPLHWAAFKNNAECVRALLESGASVNALDYNNDTPLSWAAMKGNLESVSILLDYGAEVRVINLKGQTPISRLVALLVRGLGTEKEDSCFELLHRAVGQFELRKNGIMPREVTKDQQLCEKLTVLCSAPGTLKTLARYAVRRSLGLQYLPDAVKGLPLPVSLKDYLLLLE.

S17 carries the post-translational modification Phosphoserine. ANK repeat units follow at residues G52–A81, Y85–A113, N117–A146, and N150–V179. The 54-residue stretch at Q235 to E288 folds into the SOCS box domain.

The protein belongs to the ankyrin SOCS box (ASB) family. As to quaternary structure, interacts with TBK1; this interaction promotes TBK1 proteasomal degradation. Phosphorylated by TBK1.

The protein localises to the cytoplasm. Its pathway is protein modification; protein ubiquitination. Its function is as follows. May be a substrate-recognition component of a SCF-like ECS (Elongin-Cullin-SOCS-box protein) E3 ubiquitin-protein ligase complex which mediates the ubiquitination and subsequent proteasomal degradation of target proteins. Inhibits IFN-beta production through the IRF3 signaling pathway by targeting TBK1 via 'Lys-48'-linked ubiquitination, leading to its proteasomal degradation. The protein is Ankyrin repeat and SOCS box protein 8 (Asb8) of Mus musculus (Mouse).